Reading from the N-terminus, the 301-residue chain is MSWIIFYTVIAALLVLDLGIVHKKNTVMSFKESVLFSLFYFVIACLFGIYFYYNTGAEHAREYYTCFLIEKAMSLDNIFVISIIFQFFKIPGKYQHRVLFFGIIGVIIFRAIMIYGGTILINKFAWLLYIFAVILIATGIKTFYVSHKTFDIQNSYIYKSIVKNLNITPNLEGDKFVVKRNNKLYFTPLFISLVLIEAIDLVFAIDSIPAIFAITNDVYIIYTSNIFAILGLRALFFCLAEIVERFSYIKYSLALILIFIGFKIFIHHYIAIPAYVSLIVTITLLLFGIIASIIRKNMIDH.

A run of 9 helical transmembrane segments spans residues 1 to 21, 33 to 53, 72 to 92, 101 to 121, 124 to 144, 185 to 205, 220 to 240, 246 to 266, and 270 to 290; these read MSWI…LGIV, SVLF…YFYY, AMSL…KIPG, FGII…TILI, FAWL…KTFY, YFTP…VFAI, IIYT…FCLA, FSYI…KIFI, and IAIP…FGII.

The protein belongs to the TerC family.

The protein localises to the cell membrane. This is an uncharacterized protein from Rickettsia felis (strain ATCC VR-1525 / URRWXCal2) (Rickettsia azadi).